We begin with the raw amino-acid sequence, 331 residues long: 6-phosphogluconolactonase (331 aa).

At K287 the chain carries N6-acetyllysine.

This sequence belongs to the cycloisomerase 2 family.

It carries out the reaction 6-phospho-D-glucono-1,5-lactone + H2O = 6-phospho-D-gluconate + H(+). The protein operates within carbohydrate degradation; pentose phosphate pathway; D-ribulose 5-phosphate from D-glucose 6-phosphate (oxidative stage): step 2/3. Its function is as follows. Catalyzes the hydrolysis of 6-phosphogluconolactone to 6-phosphogluconate. The protein is 6-phosphogluconolactonase of Shigella flexneri.